A 119-amino-acid chain; its full sequence is Large ribosomal subunit protein uL24 (119 aa).

Belongs to the universal ribosomal protein uL24 family. In terms of assembly, part of the 50S ribosomal subunit.

Its function is as follows. One of two assembly initiator proteins, it binds directly to the 5'-end of the 23S rRNA, where it nucleates assembly of the 50S subunit. Located at the polypeptide exit tunnel on the outside of the subunit. This is Large ribosomal subunit protein uL24 from Methanococcus vannielii.